Consider the following 330-residue polypeptide: Phenylalanine--tRNA ligase alpha subunit (330 aa).

Position 246 (Glu-246) interacts with Mg(2+).

Belongs to the class-II aminoacyl-tRNA synthetase family. Phe-tRNA synthetase alpha subunit type 1 subfamily. As to quaternary structure, tetramer of two alpha and two beta subunits. Mg(2+) is required as a cofactor.

It is found in the cytoplasm. It carries out the reaction tRNA(Phe) + L-phenylalanine + ATP = L-phenylalanyl-tRNA(Phe) + AMP + diphosphate + H(+). The polypeptide is Phenylalanine--tRNA ligase alpha subunit (Sulfurimonas denitrificans (strain ATCC 33889 / DSM 1251) (Thiomicrospira denitrificans (strain ATCC 33889 / DSM 1251))).